Reading from the N-terminus, the 894-residue chain is RNA polymerase I-specific transcription initiation factor RRN6 (894 aa).

Residues 803–894 (PPFNLNSQSQ…KKKKRIRGFG (92 aa)) form a disordered region. Polar residues-rich tracts occupy residues 806–823 (NLNS…QSSG), 832–849 (KTQS…QNLS), and 863–880 (QPPS…PRNS). A compositionally biased stretch (basic residues) spans 881-894 (QKAKKKKKRIRGFG).

In terms of assembly, component of the core factor (CF) complex, which consists of RRN6, RRN7 and RRN11. The CF heterotrimer may further dimerize to form a hexamer. RRN6 interacts with RRN7, RRN11 and RRN9.

It is found in the cytoplasm. The protein localises to the nucleus. Its subcellular location is the nucleolus. Its function is as follows. Acts as a component of the core factor (CF) complex which is essential for the initiation of rDNA transcription by RNA polymerase I. After binding of UAF (upstream activation factor) to an upstream element of the promoter, CF is recruited in a SPT15/TBP-dependent manner to form a preinitiation complex. The sequence is that of RNA polymerase I-specific transcription initiation factor RRN6 (RRN6) from Saccharomyces cerevisiae (strain ATCC 204508 / S288c) (Baker's yeast).